A 216-amino-acid polypeptide reads, in one-letter code: U1 small nuclear ribonucleoprotein A (216 aa).

RRM domains are found at residues 7-86 and 142-216; these read QTIY…YSKS and QILF…FAKK. The tract at residues 97–142 is disordered; the sequence is TFKERPKKVKPPKPAPGTDEKKDKKKKPSSAENSNPNAQTEQPPNQ. Residues 126 to 142 show a composition bias toward polar residues; that stretch reads SAENSNPNAQTEQPPNQ.

Belongs to the RRM U1 A/B'' family. In terms of assembly, belongs to the spliceosome where it is associated with snRNP U1. Interacts with the SMN complex.

Its subcellular location is the nucleus. Functionally, binds stem loop II of U1 snRNA. It is the first snRNP to interact with pre-mRNA. This interaction is required for the subsequent binding of U2 snRNP and the U4/U6/U5 tri-snRNP. Plays a role in regulating sex-lethal splicing. This is U1 small nuclear ribonucleoprotein A (snf) from Drosophila melanogaster (Fruit fly).